The chain runs to 377 residues: DnaJ-related protein SCJ1 (377 aa).

Residues 1–21 (MIPKLYIHLILSLLLLPLILA) form the signal peptide. The J domain maps to 23 to 88 (DYYAILEIDK…EKKKIYDQFG (66 aa)). Residues 156-237 (GSSIEFTLNL…CHGKKVTKKN (82 aa)) form a CR-type zinc finger. CXXCXGXG motif repeat units follow at residues 169–176 (CDACHGSG), 185–192 (CPDCQGRG), 211–218 (CGRCGGTG), and 225–232 (CKTCHGKK). Positions 288–290 (RGD) match the Cell attachment site motif. Positions 374 to 377 (KDEL) match the Prevents secretion from ER motif.

The protein localises to the endoplasmic reticulum lumen. In terms of biological role, regulates protein folding in the endoplasmic reticulum lumen. Probably acts as a J-protein for the Hsp70-type chaperone KAR2 by stimulating its ATP-dependent reaction cycle and initiating folding reactions. Also involved in the endoplasmic reticulum-associated degradation (ERAD) process. Cooperates with KAR2 and another J-protein JEM1 to facilitate the export of ERAD substrates to the cytoplasm by maintaining them in a translocation-competent state and preventing their aggregation in the endoplasmic reticulum lumen. In Saccharomyces cerevisiae (strain ATCC 204508 / S288c) (Baker's yeast), this protein is DnaJ-related protein SCJ1 (SCJ1).